Reading from the N-terminus, the 546-residue chain is Chaperonin GroEL (546 aa).

Residues 30 to 33 (TLGP), Lys-51, 87 to 91 (DGTTT), Gly-415, and Asp-496 contribute to the ATP site. A disordered region spans residues 527–546 (EKKAPAGAPGGMGGMGDMDF). The segment covering 534-546 (APGGMGGMGDMDF) has biased composition (gly residues).

Belongs to the chaperonin (HSP60) family. As to quaternary structure, forms a cylinder of 14 subunits composed of two heptameric rings stacked back-to-back. Interacts with the co-chaperonin GroES.

The protein localises to the cytoplasm. The catalysed reaction is ATP + H2O + a folded polypeptide = ADP + phosphate + an unfolded polypeptide.. Together with its co-chaperonin GroES, plays an essential role in assisting protein folding. The GroEL-GroES system forms a nano-cage that allows encapsulation of the non-native substrate proteins and provides a physical environment optimized to promote and accelerate protein folding. The protein is Chaperonin GroEL of Rhodospirillum centenum (strain ATCC 51521 / SW).